We begin with the raw amino-acid sequence, 71 residues long: uncharacterized protein (71 aa).

2 helical membrane-spanning segments follow: residues 9 to 29 (FVIFSLFFTFISVSTFGNINF) and 41 to 61 (FVALFYIFTHTSFTSLCFFGL).

It localises to the membrane. This is an uncharacterized protein from Acheta domesticus (House cricket).